Here is a 506-residue protein sequence, read N- to C-terminus: ATP synthase subunit alpha (506 aa).

169 to 176 (GDRQTGKT) is an ATP binding site.

Belongs to the ATPase alpha/beta chains family. In terms of assembly, F-type ATPases have 2 components, CF(1) - the catalytic core - and CF(0) - the membrane proton channel. CF(1) has five subunits: alpha(3), beta(3), gamma(1), delta(1), epsilon(1). CF(0) has three main subunits: a(1), b(2) and c(9-12). The alpha and beta chains form an alternating ring which encloses part of the gamma chain. CF(1) is attached to CF(0) by a central stalk formed by the gamma and epsilon chains, while a peripheral stalk is formed by the delta and b chains.

Its subcellular location is the cell membrane. It carries out the reaction ATP + H2O + 4 H(+)(in) = ADP + phosphate + 5 H(+)(out). Its function is as follows. Produces ATP from ADP in the presence of a proton gradient across the membrane. The alpha chain is a regulatory subunit. The chain is ATP synthase subunit alpha from Acetivibrio thermocellus (strain ATCC 27405 / DSM 1237 / JCM 9322 / NBRC 103400 / NCIMB 10682 / NRRL B-4536 / VPI 7372) (Clostridium thermocellum).